Reading from the N-terminus, the 233-residue chain is Large ribosomal subunit protein uL1 (233 aa).

Belongs to the universal ribosomal protein uL1 family. Part of the 50S ribosomal subunit.

Functionally, binds directly to 23S rRNA. The L1 stalk is quite mobile in the ribosome, and is involved in E site tRNA release. Protein L1 is also a translational repressor protein, it controls the translation of the L11 operon by binding to its mRNA. The polypeptide is Large ribosomal subunit protein uL1 (Shewanella oneidensis (strain ATCC 700550 / JCM 31522 / CIP 106686 / LMG 19005 / NCIMB 14063 / MR-1)).